A 98-amino-acid chain; its full sequence is ESAT-6-like protein EsxJ (98 aa).

The protein belongs to the WXG100 family. CFP-10 subfamily.

The protein resides in the secreted. In Mycobacterium bovis (strain ATCC BAA-935 / AF2122/97), this protein is ESAT-6-like protein EsxJ.